An 846-amino-acid chain; its full sequence is Patched domain-containing protein 4 (846 aa).

The next 10 membrane-spanning stretches (helical) occupy residues 41 to 61, 230 to 250, 265 to 285, 293 to 313, 336 to 356, 373 to 393, 465 to 485, 660 to 680, 686 to 706, and 718 to 738; these read HPVFFLTVPAVLTITFGLSAL, SILARSKVLVSLVLILTTATL, GLLGVLTVCISIITAAGIFFI, TLLGIPFFAMGHGTKGVFELL, VMVTYTMTSSLYFITFGMGAS, VSILLNYFYIFSFFGSCLVFA, PFVVILYLIYASFSFMGCLQI, PVLIAGFGVLLVLILTFFLVI, FWLILSVTSIELGVLGLMTLW, and LIYTLNFAIDHCAPLLFTFVL. The 160-residue stretch at 233–392 folds into the SSD domain; it reads ARSKVLVSLV…FSFFGSCLVF (160 aa). The N-linked (GlcNAc...) asparagine glycan is linked to Asn-762. Helical transmembrane passes span 765–785 and 787–807; these read SFLIGLVPLLFVPSNLTFTLF and CLLLTGGCTLLHCFVILPVFL.

This sequence belongs to the patched family.

It localises to the membrane. Its function is as follows. Could act as a repressor of canonical hedgehog signaling by antagonizing the effects of SMO, as suggested by down-regulation of hedgehog target genes, including GLI1, PTCH1, and PTCH2 in PTCHD4-expressing cells. The chain is Patched domain-containing protein 4 (PTCHD4) from Homo sapiens (Human).